Reading from the N-terminus, the 388-residue chain is Glucose-1-phosphate adenylyltransferase (388 aa).

Residues Tyr-100, Gly-165, 180–181, and Ser-191 each bind alpha-D-glucose 1-phosphate; that span reads EK.

This sequence belongs to the bacterial/plant glucose-1-phosphate adenylyltransferase family. Homotetramer.

The enzyme catalyses alpha-D-glucose 1-phosphate + ATP + H(+) = ADP-alpha-D-glucose + diphosphate. Its pathway is glycan biosynthesis; glycogen biosynthesis. Functionally, involved in the biosynthesis of ADP-glucose, a building block required for the elongation reactions to produce glycogen. Catalyzes the reaction between ATP and alpha-D-glucose 1-phosphate (G1P) to produce pyrophosphate and ADP-Glc. The chain is Glucose-1-phosphate adenylyltransferase from Clostridium perfringens (strain SM101 / Type A).